Consider the following 336-residue polypeptide: tRNA(Ile)-lysidine synthase (336 aa).

32–37 serves as a coordination point for ATP; sequence SGGQDS.

It belongs to the tRNA(Ile)-lysidine synthase family.

Its subcellular location is the cytoplasm. The catalysed reaction is cytidine(34) in tRNA(Ile2) + L-lysine + ATP = lysidine(34) in tRNA(Ile2) + AMP + diphosphate + H(+). Functionally, ligates lysine onto the cytidine present at position 34 of the AUA codon-specific tRNA(Ile) that contains the anticodon CAU, in an ATP-dependent manner. Cytidine is converted to lysidine, thus changing the amino acid specificity of the tRNA from methionine to isoleucine. In Synechococcus sp. (strain JA-3-3Ab) (Cyanobacteria bacterium Yellowstone A-Prime), this protein is tRNA(Ile)-lysidine synthase.